A 462-amino-acid chain; its full sequence is Asparagine--tRNA ligase (462 aa).

This sequence belongs to the class-II aminoacyl-tRNA synthetase family. In terms of assembly, homodimer.

The protein localises to the cytoplasm. The enzyme catalyses tRNA(Asn) + L-asparagine + ATP = L-asparaginyl-tRNA(Asn) + AMP + diphosphate + H(+). This chain is Asparagine--tRNA ligase, found in Borreliella afzelii (strain PKo) (Borrelia afzelii).